The following is a 428-amino-acid chain: Enolase (428 aa).

Gln163 is a binding site for (2R)-2-phosphoglycerate. Residue Glu205 is the Proton donor of the active site. Mg(2+)-binding residues include Asp242, Glu286, and Asp313. Positions 338, 367, 368, and 389 each coordinate (2R)-2-phosphoglycerate. Lys338 acts as the Proton acceptor in catalysis.

This sequence belongs to the enolase family. Mg(2+) serves as cofactor.

It localises to the cytoplasm. Its subcellular location is the secreted. It is found in the cell surface. It carries out the reaction (2R)-2-phosphoglycerate = phosphoenolpyruvate + H2O. The protein operates within carbohydrate degradation; glycolysis; pyruvate from D-glyceraldehyde 3-phosphate: step 4/5. Catalyzes the reversible conversion of 2-phosphoglycerate (2-PG) into phosphoenolpyruvate (PEP). It is essential for the degradation of carbohydrates via glycolysis. The polypeptide is Enolase (Syntrophus aciditrophicus (strain SB)).